Here is a 378-residue protein sequence, read N- to C-terminus: tRNA N(3)-cytidine methyltransferase METTL2 (378 aa).

Positions 78, 82, 188, 213, 239, 240, and 260 each coordinate S-adenosyl-L-methionine.

This sequence belongs to the methyltransferase superfamily. METL family. As to quaternary structure, monomer. Interacts with DALRD3.

It is found in the cytoplasm. It carries out the reaction cytidine(32) in tRNA(Thr) + S-adenosyl-L-methionine = N(3)-methylcytidine(32) in tRNA(Thr) + S-adenosyl-L-homocysteine + H(+). It catalyses the reaction cytidine(32) in tRNA(Arg)(CCU) + S-adenosyl-L-methionine = N(3)-methylcytidine(32) in tRNA(Arg)(CCU) + S-adenosyl-L-homocysteine + H(+). In terms of biological role, S-adenosyl-L-methionine-dependent methyltransferase that mediates N(3)-methylcytidine modification of residue 32 of the tRNA anticodon loop of tRNA(Thr)(UGU) and tRNA(Arg)(CCU). N(3)-methylcytidine methylation by METTL2 requires the N6-threonylcarbamoylation of tRNA (t6A37) by the EKC/KEOPS complex as prerequisite. This Bos taurus (Bovine) protein is tRNA N(3)-cytidine methyltransferase METTL2 (METTL2).